Reading from the N-terminus, the 586-residue chain is Solute carrier family 13 member 2 (586 aa).

The next 3 helical transmembrane spans lie at 13-33 (SYLI…IVQT), 53-73 (ALPL…MGIM), and 86-106 (TNIL…WNLH). Positions 165 to 175 (DVEEGNSNPSF) are enriched in polar residues. Residues 165-209 (DVEEGNSNPSFELQEASPQKEETKLDNGQAVSVSSEPRAQKTKEH) form a disordered region. A run of 9 helical transmembrane segments spans residues 215–235 (GLSL…LTGT), 264–284 (FAFP…QVLF), 319–339 (PMSF…VLWF), 366–386 (GTVA…IPGL), 407–427 (TVND…FALA), 445–465 (PLQH…VAIF), 478–498 (FLPI…YVML), 506–526 (LAFM…FGGL), and 535–555 (GFLL…SWSI).

Belongs to the SLC13A/DASS transporter (TC 2.A.47) family. NADC subfamily. As to expression, highly expressed in kidney and small intestine. Not detectable in brain, heart, stomach and skeletal muscle.

It is found in the apical cell membrane. It carries out the reaction succinate(out) + 3 Na(+)(out) = succinate(in) + 3 Na(+)(in). It catalyses the reaction fumarate(out) + 3 Na(+)(out) = fumarate(in) + 3 Na(+)(in). The enzyme catalyses 2-oxoglutarate(out) + 3 Na(+)(out) = 2-oxoglutarate(in) + 3 Na(+)(in). With respect to regulation, li(+) decreases succinate transport in the presence of Na(+), by competing at one of the three cation binding sites. In terms of biological role, low-affinity sodium-dicarboxylate cotransporter, that mediates the entry of citric acid cycle intermediates, such as succinate, citrate, fumarate and alpha-ketoglutarate (2-oxoglutarate) into the small intestine and renal proximal tubule. Can transport citrate in a Na(+)-dependent manner, recognizing the divalent form of citrate rather than the trivalent form which is normally found in blood. Transports the dicarboxylate into the cell with a probable stoichiometry of 3 Na(+) for 1 divalent dicarboxylate, rendering the process electrogenic. Has a critical role in renal dicarboxylate transport. The protein is Solute carrier family 13 member 2 (Slc13a2) of Mus musculus (Mouse).